Reading from the N-terminus, the 57-residue chain is Large ribosomal subunit protein bL32 (57 aa).

Residues methionine 1–glutamine 19 are compositionally biased toward basic residues. The tract at residues methionine 1–alanine 22 is disordered.

The protein belongs to the bacterial ribosomal protein bL32 family.

This chain is Large ribosomal subunit protein bL32, found in Mycobacterium tuberculosis (strain ATCC 25177 / H37Ra).